The chain runs to 131 residues: ATP synthase epsilon chain (131 aa).

Belongs to the ATPase epsilon chain family. As to quaternary structure, F-type ATPases have 2 components, CF(1) - the catalytic core - and CF(0) - the membrane proton channel. CF(1) has five subunits: alpha(3), beta(3), gamma(1), delta(1), epsilon(1). CF(0) has three main subunits: a, b and c.

Its subcellular location is the cell inner membrane. Produces ATP from ADP in the presence of a proton gradient across the membrane. This is ATP synthase epsilon chain from Wolinella succinogenes (strain ATCC 29543 / DSM 1740 / CCUG 13145 / JCM 31913 / LMG 7466 / NCTC 11488 / FDC 602W) (Vibrio succinogenes).